The primary structure comprises 99 residues: Plastocyanin (99 aa).

The Plastocyanin-like domain maps to 1–99 (VEVLLGASDG…AGMVGQVTVN (99 aa)). Cu cation is bound by residues His37, Cys84, His87, and Met92.

This sequence belongs to the plastocyanin family. It depends on Cu(2+) as a cofactor.

The protein localises to the plastid. It is found in the chloroplast thylakoid membrane. Participates in electron transfer between P700 and the cytochrome b6-f complex in photosystem I. This is Plastocyanin (PETE) from Vicia faba (Broad bean).